We begin with the raw amino-acid sequence, 162 residues long: CASP-like protein 1C1 (162 aa).

Over 1–7 (MAKLHRL) the chain is Cytoplasmic. A helical membrane pass occupies residues 8-28 (ISAVLRLAAAGAAAAAAIIMV). Over 29–50 (TSHETTSFFGIEMEAKYSYTPS) the chain is Extracellular. A helical transmembrane segment spans residues 51-71 (FVFFVVAFAVAFAYSLLALLA). Topologically, residues 72–79 (RPGSTASR) are cytoplasmic. Residues 80 to 100 (LLLLSDVMVGMLLTGAVAATG) traverse the membrane as a helical segment. Residues 101–128 (AISQVGKSGNEHAGWLPICAQVQAYCSH) lie on the Extracellular side of the membrane. Residues 129-149 (VMGALIAGFVSLLLYFLIIMY) form a helical membrane-spanning segment. Residues 150–162 (SLHAVAEPLCSCH) are Cytoplasmic-facing.

Belongs to the Casparian strip membrane proteins (CASP) family. As to quaternary structure, homodimer and heterodimers.

The protein localises to the cell membrane. The protein is CASP-like protein 1C1 of Sorghum bicolor (Sorghum).